A 365-amino-acid polypeptide reads, in one-letter code: Eukaryotic translation initiation factor 3 subunit H (365 aa).

The 152-residue stretch at 15-166 folds into the MPN domain; the sequence is ILLDSLVVMK…IRAWRLSTAA (152 aa). The segment at 276-295 is disordered; sequence KRQQENESRLARGDPPLPMD. The span at 277 to 287 shows a compositional bias: basic and acidic residues; sequence RQQENESRLAR.

It belongs to the eIF-3 subunit H family. In terms of assembly, component of the eukaryotic translation initiation factor 3 (eIF-3) complex.

It localises to the cytoplasm. Functionally, component of the eukaryotic translation initiation factor 3 (eIF-3) complex, which is involved in protein synthesis of a specialized repertoire of mRNAs and, together with other initiation factors, stimulates binding of mRNA and methionyl-tRNAi to the 40S ribosome. The eIF-3 complex specifically targets and initiates translation of a subset of mRNAs involved in cell proliferation. This Caenorhabditis briggsae protein is Eukaryotic translation initiation factor 3 subunit H.